The following is a 136-amino-acid chain: Large ribosomal subunit protein uL16 (136 aa).

Belongs to the universal ribosomal protein uL16 family. Part of the 50S ribosomal subunit.

Its function is as follows. Binds 23S rRNA and is also seen to make contacts with the A and possibly P site tRNAs. This chain is Large ribosomal subunit protein uL16, found in Actinobacillus succinogenes (strain ATCC 55618 / DSM 22257 / CCUG 43843 / 130Z).